We begin with the raw amino-acid sequence, 65 residues long: Beta-mammal toxin Tma1 (65 aa).

Residues 2-64 (KEGYLVGNDG…TWNSAKNRCG (63 aa)) enclose the LCN-type CS-alpha/beta domain. 4 disulfide bridges follow: Cys-12-Cys-63, Cys-16-Cys-38, Cys-24-Cys-44, and Cys-28-Cys-46.

It belongs to the long (4 C-C) scorpion toxin superfamily. Sodium channel inhibitor family. As to expression, expressed by the venom gland.

Its subcellular location is the secreted. Beta toxins bind voltage-independently at site-4 of sodium channels (Nav) and shift the voltage of activation toward more negative potentials thereby affecting sodium channel activation and promoting spontaneous and repetitive firing. This toxin acts on human Nav1.4/SCN4A and Nav1.6/SCN8A voltage-gated sodium channels. The chain is Beta-mammal toxin Tma1 from Tityus macrochirus (Scorpion).